Reading from the N-terminus, the 198-residue chain is Na(+)-translocating NADH-quinone reductase subunit E (198 aa).

Transmembrane regions (helical) follow at residues 11 to 31, 35 to 55, 77 to 97, 110 to 130, 140 to 160, and 176 to 196; these read AVFIENMALSFFLGMCTFLAV, VSTAFGLGIAVTFVLGIAVPV, FLNFITFIGVIAGLVQILEMV, GIFLPLIAVNCAIFGGVSFMV, IVYGFGSGLGWMLAIVALAGL, and LGITFISVGLMALGFMSFSGI.

Belongs to the NqrDE/RnfAE family. In terms of assembly, composed of six subunits; NqrA, NqrB, NqrC, NqrD, NqrE and NqrF.

It localises to the cell inner membrane. It catalyses the reaction a ubiquinone + n Na(+)(in) + NADH + H(+) = a ubiquinol + n Na(+)(out) + NAD(+). NQR complex catalyzes the reduction of ubiquinone-1 to ubiquinol by two successive reactions, coupled with the transport of Na(+) ions from the cytoplasm to the periplasm. NqrA to NqrE are probably involved in the second step, the conversion of ubisemiquinone to ubiquinol. This chain is Na(+)-translocating NADH-quinone reductase subunit E, found in Haemophilus influenzae (strain 86-028NP).